The following is a 101-amino-acid chain: Apolipoprotein C-II (101 aa).

The N-terminal stretch at 1–22 (MGTRCLLVLLLVLLVLKCEVQG) is a signal peptide. Positions 23–28 (DDMARQ) are cleaved as a propeptide — removed in mature form. Residues 66 to 74 (AMDEKIRDM) are lipid binding. Positions 78–101 (STAAVRIYTGILTDQILSMLTGDP) are lipoprotein lipase cofactor.

This sequence belongs to the apolipoprotein C2 family. Post-translationally, proapolipoprotein C-II is synthesized as a sialic acid containing glycoprotein which is subsequently desialylated prior to its proteolytic processing. In terms of processing, proapolipoprotein C-II, the major form found in plasma undergoes proteolytic cleavage of its N-terminal hexapeptide to generate the mature form apolipoprotein C-II, which occurs as the minor form in plasma.

The protein resides in the secreted. Functionally, component of chylomicrons, very low-density lipoproteins (VLDL), low-density lipoproteins (LDL), and high-density lipoproteins (HDL) in plasma. Plays an important role in lipoprotein metabolism as an activator of lipoprotein lipase, the enzyme which hydrolyzes the triacylglycerols on chylomicrons and VLDL. This Panthera tigris altaica (Siberian tiger) protein is Apolipoprotein C-II (APOC2).